The following is a 199-amino-acid chain: Mediator of RNA polymerase II transcription subunit 29 (199 aa).

The segment covering 1-17 has biased composition (low complexity); that stretch reads MAAPQPQAAAVSSASGV. Positions 1 to 47 are disordered; sequence MAAPQPQAAAVSSASGVSGPGSAGGPGPQQQPQPTQLVGSAQSGLLQ. The residue at position 2 (alanine 2) is an N-acetylalanine. Residues 18–27 show a composition bias toward gly residues; that stretch reads SGPGSAGGPG. Over residues 28 to 47 the composition is skewed to low complexity; the sequence is PQQQPQPTQLVGSAQSGLLQ.

This sequence belongs to the Mediator complex subunit 29 family. Component of the Mediator complex, which is composed of MED1, MED4, MED6, MED7, MED8, MED9, MED10, MED11, MED12, MED13, MED13L, MED14, MED15, MED16, MED17, MED18, MED19, MED20, MED21, MED22, MED23, MED24, MED25, MED26, MED27, MED29, MED30, MED31, CCNC, CDK8 and CDC2L6/CDK11. The MED12, MED13, CCNC and CDK8 subunits form a distinct module termed the CDK8 module. Mediator containing the CDK8 module is less active than Mediator lacking this module in supporting transcriptional activation. Individual preparations of the Mediator complex lacking one or more distinct subunits have been variously termed ARC, CRSP, DRIP, PC2, SMCC and TRAP. Associates with the MED18/MED20 heteromer.

Its subcellular location is the nucleus. Component of the Mediator complex, a coactivator involved in the regulated transcription of nearly all RNA polymerase II-dependent genes. Mediator functions as a bridge to convey information from gene-specific regulatory proteins to the basal RNA polymerase II transcription machinery. Mediator is recruited to promoters by direct interactions with regulatory proteins and serves as a scaffold for the assembly of a functional preinitiation complex with RNA polymerase II and the general transcription factors. The protein is Mediator of RNA polymerase II transcription subunit 29 (Med29) of Mus musculus (Mouse).